The chain runs to 204 residues: Large ribosomal subunit protein eL15 (204 aa).

This sequence belongs to the eukaryotic ribosomal protein eL15 family. As to quaternary structure, component of the large ribosomal subunit.

The protein resides in the cytoplasm. Its function is as follows. Component of the large ribosomal subunit. The ribosome is a large ribonucleoprotein complex responsible for the synthesis of proteins in the cell. The chain is Large ribosomal subunit protein eL15 (rpl15) from Paramisgurnus dabryanus.